A 1243-amino-acid chain; its full sequence is DNA polymerase II large subunit (1243 aa).

The protein belongs to the archaeal DNA polymerase II family. As to quaternary structure, heterodimer of a large subunit and a small subunit.

It carries out the reaction DNA(n) + a 2'-deoxyribonucleoside 5'-triphosphate = DNA(n+1) + diphosphate. The catalysed reaction is Exonucleolytic cleavage in the 3'- to 5'-direction to yield nucleoside 5'-phosphates.. In terms of biological role, possesses two activities: a DNA synthesis (polymerase) and an exonucleolytic activity that degrades single-stranded DNA in the 3'- to 5'-direction. Has a template-primer preference which is characteristic of a replicative DNA polymerase. This Nanoarchaeum equitans (strain Kin4-M) protein is DNA polymerase II large subunit.